A 631-amino-acid polypeptide reads, in one-letter code: Chaperone protein DnaK (631 aa).

Threonine 197 carries the phosphothreonine; by autocatalysis modification. Residues 598–631 (MYKKEQGQTGGTEQGGTEQKKSGGDDDVIDAEVE) form a disordered region. The segment covering 622–631 (DDDVIDAEVE) has biased composition (acidic residues).

It belongs to the heat shock protein 70 family.

Acts as a chaperone. The protein is Chaperone protein DnaK of Nitratiruptor sp. (strain SB155-2).